The following is a 147-amino-acid chain: Hemoglobin subunit beta (147 aa).

Positions 3 to 147 (EWTDKERTII…VVSALGKQYH (145 aa)) constitute a Globin domain. Heme b-binding residues include histidine 64 and histidine 93.

It belongs to the globin family. In terms of assembly, heterotetramer of two alpha chains and two beta chains. Red blood cells.

Functionally, involved in oxygen transport from gills to the various peripheral tissues. This Trematomus newnesi (Dusky notothen) protein is Hemoglobin subunit beta.